A 185-amino-acid polypeptide reads, in one-letter code: Large ribosomal subunit protein uL5 (185 aa).

The protein belongs to the universal ribosomal protein uL5 family. As to quaternary structure, part of the 50S ribosomal subunit; part of the 5S rRNA subcomplex. Contacts the 5S rRNA and the P site tRNA. Forms a bridge to the 30S subunit in the 70S ribosome. Both N-terminus methionine truncation and retention have been observed for this protein. Post-translationally, may be methylated twice, on undetermined residues.

This is one of the proteins that bind and probably mediate the attachment of the 5S RNA into the large ribosomal subunit, where it forms part of the central protuberance. In the 70S ribosome it contacts protein S13 of the 30S subunit (bridge B1b), connecting the 2 subunits; this bridge is implicated in subunit movement. Contacts the P site tRNA; the 5S rRNA and some of its associated proteins might help stabilize positioning of ribosome-bound tRNAs. This is Large ribosomal subunit protein uL5 from Rhodopseudomonas palustris (strain ATCC BAA-98 / CGA009).